Reading from the N-terminus, the 554-residue chain is 4-coumarate--CoA ligase 3 (554 aa).

ATP is bound by residues serine 188, serine 189, glycine 190, threonine 191, threonine 192, and lysine 196. Residues tyrosine 238 and serine 242 each contribute to the (E)-4-coumaroyl-AMP site. Lysine 259 contributes to the CoA binding site. Positions 261-330 (DLGALVDLVR…AKIPNAVLGQ (70 aa)) are SBD1. (E)-4-coumaroyl-AMP-binding residues include alanine 308, glutamine 330, glycine 331, threonine 335, and methionine 343. Residues glutamine 330, glycine 331, and threonine 335 each coordinate ATP. The segment at 331–398 (GYGMTEAGPV…IRGEQIMKGY (68 aa)) is SBD2. ATP contacts are provided by aspartate 419 and arginine 434. Residues lysine 436 and lysine 440 each coordinate (E)-4-coumaroyl-AMP. Positions 442 and 443 each coordinate CoA. Lysine 525 provides a ligand contact to ATP.

Belongs to the ATP-dependent AMP-binding enzyme family. The cofactor is Mg(2+). In terms of tissue distribution, expressed in root exodermis and epidermis cells, stem vascular cells, leaf developing vascular bundle cells and parenchyma cells, lemma, palea, stamens and pistil.

It catalyses the reaction (E)-ferulate + ATP + CoA = (E)-feruloyl-CoA + AMP + diphosphate. The catalysed reaction is (E)-4-coumarate + ATP + CoA = (E)-4-coumaroyl-CoA + AMP + diphosphate. The enzyme catalyses (E)-caffeate + ATP + CoA = (E)-caffeoyl-CoA + AMP + diphosphate. It carries out the reaction (E)-cinnamate + ATP + CoA = (E)-cinnamoyl-CoA + AMP + diphosphate. It catalyses the reaction (E)-ferulate + ATP + H(+) = (E)-feruloyl-AMP + diphosphate. The catalysed reaction is (E)-feruloyl-AMP + CoA = (E)-feruloyl-CoA + AMP + H(+). The enzyme catalyses (E)-4-coumarate + ATP + H(+) = (E)-4-coumaroyl-AMP + diphosphate. It carries out the reaction (E)-4-coumaroyl-AMP + CoA = (E)-4-coumaroyl-CoA + AMP + H(+). It catalyses the reaction (E)-caffeate + ATP + H(+) = (E)-caffeoyl-AMP + diphosphate. The catalysed reaction is (E)-caffeoyl-AMP + CoA = (E)-caffeoyl-CoA + AMP + H(+). It participates in phytoalexin biosynthesis; 3,4',5-trihydroxystilbene biosynthesis; 3,4',5-trihydroxystilbene from trans-4-coumarate: step 1/2. In terms of biological role, involved in the phenylpropanoid metabolism by mediating the activation of a number of hydroxycinnamates for the biosynthesis of monolignols and other phenolic secondary metabolites. Catalyzes the formation of CoA esters of cinnamate, 4-coumarate, caffeate and ferulate. Is more efficient with substrates in the following order: ferulate &gt; 4-coumarate &gt; caffeate &gt; cinnamate. Possesses very high activity compared to 4CL1, 4CL2, 4CL4 and 4CL5. Cannot convert sinapate to its corresponding CoA ester. May play a role in the synthesis of lignin as well as other phenolic compounds. Follows a two-step reaction mechanism, wherein the carboxylate substrate first undergoes adenylation by ATP, followed by a thioesterification in the presence of CoA to yield the final CoA thioester. This Oryza sativa subsp. japonica (Rice) protein is 4-coumarate--CoA ligase 3.